A 597-amino-acid chain; its full sequence is Probable translation initiation factor IF-2 (597 aa).

Residues 8 to 225 (LRQPIVVVLG…LLAGLTQQYL (218 aa)) form the tr-type G domain. The segment at 17–24 (GHVDHGKT) is G1. GTP is bound at residue 17–24 (GHVDHGKT). Residues 42 to 46 (EMTQE) form a G2 region. The interval 81-84 (DTPG) is G3. GTP-binding positions include 81–85 (DTPGH) and 135–138 (NKID). A G4 region spans residues 135–138 (NKID). The tract at residues 203-205 (SGK) is G5.

The protein belongs to the TRAFAC class translation factor GTPase superfamily. Classic translation factor GTPase family. IF-2 subfamily.

Its function is as follows. Function in general translation initiation by promoting the binding of the formylmethionine-tRNA to ribosomes. Seems to function along with eIF-2. The polypeptide is Probable translation initiation factor IF-2 (Metallosphaera sedula (strain ATCC 51363 / DSM 5348 / JCM 9185 / NBRC 15509 / TH2)).